The chain runs to 386 residues: MSFPADSVGLVTPQKFQFEEPLHLECGRVLPRFELMVETYGTLNADKSNAILICHALSGHHHAAGYHHEDDKKAGWWDSCIGPGKAIDTNKFFVVALNNIGGCSGSTGPTSPNPENDNRPYGPDFPLVTVRDWVKTQAMLSDRLGISVWYAVVGGSLGGMQALQWSVDYPDRLQKCVVIASAPKLSAQNIAFNEVARQSILSDPDFHHGRYLENDSYPKRGLILARMVGHITYLSEEAMKQKFGRDLKSGKFMYGFDVEFQVESYLRYQGEQFSRNFDADTYLIMTKALDYFDPSREYGHSLTEAMSKTKCQFLIVSFTTDWRFAPSRSQEIVDALITNHKPVSYLDIDAEQGHDSFLFPIPLYVKTLRAFLGGEEHLKSTSLEAS.

One can recognise an AB hydrolase-1 domain in the interval 49-358; it reads NAILICHALS…DAEQGHDSFL (310 aa). S156 acts as the Nucleophile in catalysis. R226 provides a ligand contact to substrate. Residues D321 and H354 contribute to the active site. Residue D355 coordinates substrate.

The protein belongs to the AB hydrolase superfamily. MetX family. As to quaternary structure, homodimer.

The protein resides in the cytoplasm. It catalyses the reaction L-homoserine + succinyl-CoA = O-succinyl-L-homoserine + CoA. The protein operates within amino-acid biosynthesis; L-methionine biosynthesis via de novo pathway; O-succinyl-L-homoserine from L-homoserine: step 1/1. Its function is as follows. Transfers a succinyl group from succinyl-CoA to L-homoserine, forming succinyl-L-homoserine. The sequence is that of Homoserine O-succinyltransferase from Acinetobacter baumannii (strain SDF).